A 791-amino-acid chain; its full sequence is Protein FAM47A (791 aa).

3 disordered regions span residues 195 to 257, 274 to 409, and 449 to 573; these read PVSH…TRRR, EDAR…TGVC, and VKKT…SEPP. Basic and acidic residues-rich tracts occupy residues 274–288 and 333–342; these read EDAR…KTTD and GESHLRLEHS. Residues 349–358 are compositionally biased toward polar residues; the sequence is SLRSEPSETG. Positions 449-462 are enriched in basic and acidic residues; sequence VKKTKEPTEPHKSP.

The protein belongs to the FAM47 family.

This chain is Protein FAM47A (FAM47A), found in Homo sapiens (Human).